Consider the following 338-residue polypeptide: Limbic system-associated membrane protein (338 aa).

An N-terminal signal peptide occupies residues 1–28 (MVARAQPDRKQLPLVLLRLLCLLPTGLP). Ig-like C2-type domains follow at residues 29–122 (VRSV…PKTS), 132–214 (PKIS…VRVT), and 219–306 (PTIT…LYLY). N-linked (GlcNAc...) asparagine glycans are attached at residues N40, N66, N136, and N148. A disulfide bond links C53 and C111. 2 cysteine pairs are disulfide-bonded: C153-C197 and C239-C290. 4 N-linked (GlcNAc...) asparagine glycosylation sites follow: N279, N287, N300, and N315. Residue N315 is the site of GPI-anchor amidated asparagine attachment. Residues 316 to 338 (GSVSLAVPLWLLAASLLCLLSKC) constitute a propeptide, removed in mature form.

This sequence belongs to the immunoglobulin superfamily. IgLON family.

The protein localises to the cell membrane. Functionally, mediates selective neuronal growth and axon targeting. Probably serves as a recognition molecule for the formation of limbic connections. The polypeptide is Limbic system-associated membrane protein (Gallus gallus (Chicken)).